The primary structure comprises 55 residues: Potassium channel toxin alpha-KTX 12 Sp2 (55 aa).

The first 18 residues, 1–18 (MRLAIILLLMTTIVLTIG), serve as a signal peptide directing secretion. 3 cysteine pairs are disulfide-bonded: C26–C46, C32–C51, and C36–C53.

Belongs to the short scorpion toxin superfamily. Potassium channel inhibitor family. Alpha-KTx 12 subfamily. Expressed by the venom gland.

It is found in the secreted. Blocks mouse voltage-gated potassium channels Kv1.3/KCNA3 (IC(50)=0.3-30 nM), when the channel is expressed in Jurkat T cells or in HEK293 cells. Also shows a weaker inhibition on mKv1.2/KCNA2 (IC(50)=56.9 nM) and mKv1.1/KCNA1 (IC(50)=485 nM). Probably through the inhibition of both Kv1.2/KCNA2 and Kv1.3/KCNA3, the toxin also reduces the free calcium concentration in Jurkat T cells, inhibits the activation of Jurkat T cells and reduces the release of inflammatory cytokines interleukin-2, showing a strong immunosuppressant effect. The chain is Potassium channel toxin alpha-KTX 12 Sp2 from Scorpiops pococki (Scorpion).